A 336-amino-acid polypeptide reads, in one-letter code: GTP 3',8-cyclase (336 aa).

The Radical SAM core domain occupies 17–238 (GFSRRFHYLR…WTQQNRNLTD (222 aa)). R26 is a GTP binding site. Residues C33 and C37 each contribute to the [4Fe-4S] cluster site. Y39 provides a ligand contact to S-adenosyl-L-methionine. C40 contributes to the [4Fe-4S] cluster binding site. R75 is a GTP binding site. G79 provides a ligand contact to S-adenosyl-L-methionine. T106 provides a ligand contact to GTP. Position 130 (S130) interacts with S-adenosyl-L-methionine. K167 is a GTP binding site. S-adenosyl-L-methionine is bound at residue M201. The [4Fe-4S] cluster site is built by C264 and C267. Residue 269-271 (RLR) participates in GTP binding. C281 is a [4Fe-4S] cluster binding site.

This sequence belongs to the radical SAM superfamily. MoaA family. As to quaternary structure, monomer and homodimer. [4Fe-4S] cluster serves as cofactor.

The enzyme catalyses GTP + AH2 + S-adenosyl-L-methionine = (8S)-3',8-cyclo-7,8-dihydroguanosine 5'-triphosphate + 5'-deoxyadenosine + L-methionine + A + H(+). The protein operates within cofactor biosynthesis; molybdopterin biosynthesis. Its function is as follows. Catalyzes the cyclization of GTP to (8S)-3',8-cyclo-7,8-dihydroguanosine 5'-triphosphate. The sequence is that of GTP 3',8-cyclase from Tolumonas auensis (strain DSM 9187 / NBRC 110442 / TA 4).